Reading from the N-terminus, the 145-residue chain is Polytheonamide B (145 aa).

Positions 1-96 (MADSDNTPTS…DDDLDQAAGG (96 aa)) are excised as a propeptide. At Thr-97 the chain carries 2-oxo-5,5-dimethylhexanoate. A 3-methylisoleucine modification is found at Ile-99. A 3-methylvaline modification is found at Val-101. 3-methyl-D-valine is present on Val-102. The residue at position 103 (Val-103) is a 3-methylvaline. Ala-104 is subject to D-alanine (Ala). Val-105 carries the post-translational modification 3-methylvaline. Residues Val-106 and Val-110 each carry the 3-methyl-D-valine modification. The residue at position 112 (Asn-112) is an N4-methyl-D-asparagine. Position 113 is a 3-hydroxyvaline (Thr) (Thr-113). Val-117 carries the 3-methylvaline modification. Position 118 is an N4-methyl-D-asparagine (Asn-118). Position 119 is a (3S)-3-methylglutamine (Gln-119). Position 120 is a 3-hydroxy-D-valine (Val-120). Asn-124 bears the N4-methyl-D-asparagine mark. Asn-126 is subject to (3R)-N4-methyl-3-hydroxy-D-asparagine. Val-127 carries the 3-methylvaline modification. Position 128 is a 3-hydroxy-D-valine (Val-128). N4-methyl-D-asparagine is present on residues Asn-130 and Asn-132. Asn-134 carries the (3R)-N4-methyl-3-hydroxy-D-asparagine modification. The residue at position 136 (Asn-136) is an N4-methyl-D-asparagine. Ser-138 is subject to D-serine (Ser). Asn-140 bears the D-asparagine mark. 3,3-dimethylmethionine is present on Met-141. Asn-142 carries the post-translational modification D-asparagine. Position 144 is a D-threonine (Thr-144).

In terms of processing, epimerization of most, and perhaps all, L- to D-amino acids is catalyzed by PoyD, when PoyA and PoyD are coexpressed in E.coli. Post-translationally, N-methylations are catalyzed by PoyE, when PoyA and PoyE are coexpressed in E.coli. To obtain 2-oxo-5,5-dimethylhexanoate, Thr-97 is firstly dehydrated by PoyF. The second step possibly corresponds to methylation by PoyB/C, and the third step may be a cleavage by PoyH/J.

Functionally, antimicrobial peptide active against Gram-positive bacteria (MIC=4-&gt;125 ug/ml). May act by forming transmembrane ion channels, since the peptide rapidly depolarizes the bacterial cytoplasmic membrane, simultaneously decreasing the membrane potential and intracellular potassium contents. This is Polytheonamide B from Bacterium symbiont subsp. Theonella swinhoei (strain pTSMAC1).